Here is a 291-residue protein sequence, read N- to C-terminus: Porphobilinogen deaminase (291 aa).

Cys237 carries the S-(dipyrrolylmethanemethyl)cysteine modification.

This sequence belongs to the HMBS family. Monomer. Requires dipyrromethane as cofactor.

It catalyses the reaction 4 porphobilinogen + H2O = hydroxymethylbilane + 4 NH4(+). It functions in the pathway porphyrin-containing compound metabolism; protoporphyrin-IX biosynthesis; coproporphyrinogen-III from 5-aminolevulinate: step 2/4. Tetrapolymerization of the monopyrrole PBG into the hydroxymethylbilane pre-uroporphyrinogen in several discrete steps. This Clostridium perfringens (strain ATCC 13124 / DSM 756 / JCM 1290 / NCIMB 6125 / NCTC 8237 / Type A) protein is Porphobilinogen deaminase.